The chain runs to 255 residues: Developmental and secondary metabolism regulator MVE1 (255 aa).

The region spanning 31–226 (GRKLTYRMSV…AEQGCRVRIR (196 aa)) is the Velvet domain. The Nuclear localization signal signature appears at 45 to 50 (VRARAC). Disordered regions lie at residues 163–184 (CKSP…DAHV) and 229–255 (VRMR…QARA). Acidic residues predominate over residues 245–255 (NYEDETAQARA).

Belongs to the velvet family. VeA subfamily. In terms of assembly, component of the heterotrimeric velvet complex composed of LAE1, MVE1 and VEL2; MVE1 acting as a bridging protein between LAE1 and VEL2.

Its subcellular location is the nucleus. The protein localises to the cytoplasm. In terms of biological role, component of the velvet transcription factor complex that controls sexual/asexual developmental ratio in response to light, promoting sexual development in the darkness while stimulating asexual sporulation under illumination. The velvet complex hat acts as a global regulator for secondary metabolite gene expression. Controls the expression of the melanin gene cluster. Mediates the light-stimulated formation of aerial mycelia. In Zymoseptoria tritici (strain CBS 115943 / IPO323) (Speckled leaf blotch fungus), this protein is Developmental and secondary metabolism regulator MVE1.